We begin with the raw amino-acid sequence, 316 residues long: KRR1 small subunit processome component (316 aa).

A KH domain is found at Ala122 to Lys192. Over residues Lys279–Ile304 the composition is skewed to basic and acidic residues. Residues Lys279–Asn316 form a disordered region.

This sequence belongs to the KRR1 family. As to quaternary structure, component of the ribosomal small subunit (SSU) processome composed of at least 40 protein subunits and snoRNA U3. Interacts with snoRNA U3. Interacts with MPP10, KRI1 and with ribosomal proteins RPS1A, RPS4A, RPS4B, RPS8A, RPS8B, RPS11A, RPS11B, RPS13, RPS24, RPS25, RPL4A, RPL7B, RPL8, RPL23, RPL25 and RPL28.

Its subcellular location is the nucleus. It is found in the nucleolus. Its function is as follows. Required for 40S ribosome biogenesis. Involved in nucleolar processing of pre-18S ribosomal RNA and ribosome assembly. Essential for vegetative growth. The sequence is that of KRR1 small subunit processome component from Saccharomyces cerevisiae (strain RM11-1a) (Baker's yeast).